The sequence spans 268 residues: Ribonuclease P protein subunit p30 (268 aa).

An N-acetylalanine modification is found at Ala2. The segment at 247–268 (KPRPSEGDEDCLPASKKAKCEG) is disordered. Phosphoserine is present on Ser251.

The protein belongs to the eukaryotic/archaeal RNase P protein component 3 family. Component of nuclear RNase P and RNase MRP ribonucleoproteins. RNase P consists of a catalytic RNA moiety and about 10 protein subunits; POP1, POP4, POP5, POP7, RPP14, RPP21, RPP25, RPP30, RPP38 and RPP40. Within the RNase P complex, POP1, POP7 and RPP25 form the 'finger' subcomplex, POP5, RPP14, RPP40 and homodimeric RPP30 form the 'palm' subcomplex, and RPP21, POP4 and RPP38 form the 'wrist' subcomplex. All subunits of the RNase P complex interact with the catalytic RNA. Several subunits of RNase P are also part of the RNase MRP complex. RNase MRP consists of a catalytic RNA moiety and about 8 protein subunits; POP1, POP7, RPP25, RPP30, RPP38, RPP40 and possibly also POP4 and POP5.

The protein localises to the nucleus. It localises to the nucleolus. Its function is as follows. Component of ribonuclease P, a ribonucleoprotein complex that generates mature tRNA molecules by cleaving their 5'-ends. Also a component of the MRP ribonuclease complex, which cleaves pre-rRNA sequences. The sequence is that of Ribonuclease P protein subunit p30 (RPP30) from Homo sapiens (Human).